The chain runs to 315 residues: UDP-3-O-acyl-N-acetylglucosamine deacetylase (315 aa).

Residues histidine 78, histidine 235, and aspartate 239 each coordinate Zn(2+). Histidine 262 functions as the Proton donor in the catalytic mechanism.

The protein belongs to the LpxC family. Requires Zn(2+) as cofactor.

The enzyme catalyses a UDP-3-O-[(3R)-3-hydroxyacyl]-N-acetyl-alpha-D-glucosamine + H2O = a UDP-3-O-[(3R)-3-hydroxyacyl]-alpha-D-glucosamine + acetate. The protein operates within glycolipid biosynthesis; lipid IV(A) biosynthesis; lipid IV(A) from (3R)-3-hydroxytetradecanoyl-[acyl-carrier-protein] and UDP-N-acetyl-alpha-D-glucosamine: step 2/6. Its function is as follows. Catalyzes the hydrolysis of UDP-3-O-myristoyl-N-acetylglucosamine to form UDP-3-O-myristoylglucosamine and acetate, the committed step in lipid A biosynthesis. The polypeptide is UDP-3-O-acyl-N-acetylglucosamine deacetylase (Syntrophus aciditrophicus (strain SB)).